A 523-amino-acid chain; its full sequence is 11-oxo-beta-amyrin 30-oxidase (523 aa).

A helical membrane pass occupies residues 9 to 29; that stretch reads AIWVVLTVILAAIPIWVCHMV. Heme is bound at residue Cys471.

It belongs to the cytochrome P450 family. Heme serves as cofactor. As to expression, expressed in roots, stolons and stems. Not detected in leaves.

The protein localises to the membrane. It carries out the reaction 11-oxo-beta-amyrin + 3 reduced [NADPH--hemoprotein reductase] + 3 O2 = glycyrrhetinate + 3 oxidized [NADPH--hemoprotein reductase] + 4 H2O + 4 H(+). It catalyses the reaction 11-oxo-beta-amyrin + reduced [NADPH--hemoprotein reductase] + O2 = 30-hydroxy-11-oxo-beta-amyrin + oxidized [NADPH--hemoprotein reductase] + H2O + H(+). The catalysed reaction is 30-hydroxy-11-oxo-beta-amyrin + reduced [NADPH--hemoprotein reductase] + O2 = glycyrrhetaldehyde + oxidized [NADPH--hemoprotein reductase] + 2 H2O + H(+). The enzyme catalyses glycyrrhetaldehyde + reduced [NADPH--hemoprotein reductase] + O2 = glycyrrhetinate + oxidized [NADPH--hemoprotein reductase] + H2O + 2 H(+). Involved in the biosynthesis of Glycyrrhetinic acid (GA), a natural product which exhibits anti-inflammatory activity. Involved in the biosynthesis of the triterpenoid saponin glycyrrhizin. Catalyzes three sequential oxidation steps at C-30 of 11-oxo-beta-amyrin. Also able to catalyze C-30 monohydroxylation of beta-amyrin to produce 30-hydroxy-beta-amyrin. May be also responsible for the oxidation at positions C-22 and C-29 in addition to C-30. This chain is 11-oxo-beta-amyrin 30-oxidase, found in Glycyrrhiza uralensis (Chinese licorice).